We begin with the raw amino-acid sequence, 177 residues long: ATP-dependent protease subunit HslV (177 aa).

Thr-2 is a catalytic residue. 3 residues coordinate Na(+): Ala-159, Asp-162, and Thr-165.

It belongs to the peptidase T1B family. HslV subfamily. In terms of assembly, a double ring-shaped homohexamer of HslV is capped on each side by a ring-shaped HslU homohexamer. The assembly of the HslU/HslV complex is dependent on binding of ATP.

Its subcellular location is the cytoplasm. It catalyses the reaction ATP-dependent cleavage of peptide bonds with broad specificity.. Its activity is regulated as follows. Allosterically activated by HslU binding. In terms of biological role, protease subunit of a proteasome-like degradation complex believed to be a general protein degrading machinery. The polypeptide is ATP-dependent protease subunit HslV (Lactobacillus leichmannii).